Reading from the N-terminus, the 436-residue chain is Trigger factor (436 aa).

The 86-residue stretch at 163 to 248 (GDRATIDFEG…VKKIEAAHLP (86 aa)) folds into the PPIase FKBP-type domain.

It belongs to the FKBP-type PPIase family. Tig subfamily.

Its subcellular location is the cytoplasm. It catalyses the reaction [protein]-peptidylproline (omega=180) = [protein]-peptidylproline (omega=0). Its function is as follows. Involved in protein export. Acts as a chaperone by maintaining the newly synthesized protein in an open conformation. Functions as a peptidyl-prolyl cis-trans isomerase. The sequence is that of Trigger factor from Polaromonas sp. (strain JS666 / ATCC BAA-500).